Reading from the N-terminus, the 172-residue chain is C-phycocyanin beta chain (172 aa).

An N4-methylasparagine modification is found at asparagine 72. The (2R,3E)-phycocyanobilin site is built by cysteine 82 and cysteine 153.

Belongs to the phycobiliprotein family. In terms of assembly, heterodimer of an alpha and a beta subunit, which further assembles into trimers and the trimers into hexamers. The basic functional unit of phycobiliproteins is a ring-shaped hexamer formed from two back-to-back trimers contacting via the alpha chain subunits. The trimers are composed of alpha/beta subunit heterodimers arranged around a three-fold axis of symmetry. The phycoerythrins also contain a gamma subunit which is located in the center of the hexamer. In terms of processing, contains two covalently linked bilin chromophores.

The protein resides in the plastid. Its subcellular location is the chloroplast thylakoid membrane. In terms of biological role, light-harvesting photosynthetic bile pigment-protein from the phycobiliprotein complex (phycobilisome, PBS). Phycocyanin is the major phycobiliprotein in the PBS rod. The polypeptide is C-phycocyanin beta chain (cpcB) (Rhodella violacea (Red alga)).